Consider the following 410-residue polypeptide: Porin-like protein GalP (410 aa).

The N-terminal stretch at 1–25 is a signal peptide; it reads MKCRTLYPLVPTFALAASLPLQALA.

The protein belongs to the outer membrane porin (Opr) (TC 1.B.25) family.

Probable transporter, possibly involved in the gallate degradation pathway. May play a role in the uptake of low gallate concentrations that may exist in the natural habitats of P.putida. The chain is Porin-like protein GalP (galP) from Pseudomonas putida (strain ATCC 47054 / DSM 6125 / CFBP 8728 / NCIMB 11950 / KT2440).